Here is a 568-residue protein sequence, read N- to C-terminus: Urease subunit alpha (568 aa).

The 439-residue stretch at 130–568 folds into the Urease domain; that stretch reads GGIDSHIHFI…LPMAQRYFLF (439 aa). Ni(2+) contacts are provided by histidine 135, histidine 137, and lysine 218. N6-carboxylysine is present on lysine 218. Histidine 220 contributes to the substrate binding site. Histidine 247 and histidine 273 together coordinate Ni(2+). Histidine 321 (proton donor) is an active-site residue. Ni(2+) is bound at residue aspartate 361.

This sequence belongs to the metallo-dependent hydrolases superfamily. Urease alpha subunit family. As to quaternary structure, heterotrimer of UreA (gamma), UreB (beta) and UreC (alpha) subunits. Three heterotrimers associate to form the active enzyme. Requires Ni cation as cofactor. Carboxylation allows a single lysine to coordinate two nickel ions.

The protein resides in the cytoplasm. The enzyme catalyses urea + 2 H2O + H(+) = hydrogencarbonate + 2 NH4(+). It participates in nitrogen metabolism; urea degradation; CO(2) and NH(3) from urea (urease route): step 1/1. In Nitrosospira multiformis (strain ATCC 25196 / NCIMB 11849 / C 71), this protein is Urease subunit alpha.